Here is a 522-residue protein sequence, read N- to C-terminus: Aspartic and glutamic acid-rich protein (522 aa).

Residues 1–16 (MKVFVYLLVTFSLTNA) form the signal peptide. Composition is skewed to basic and acidic residues over residues 72-81 (YDDFFPKDTS) and 93-102 (SRNDDGYDLA). The disordered stretch occupies residues 72–497 (YDDFFPKDTS…KSKDAAQGNI (426 aa)). A compositionally biased stretch (acidic residues) spans 109-125 (DDEEAYDDFDEVDDRAD). Residues 142–152 (KLPAEEESKND) are compositionally biased toward basic and acidic residues. Composition is skewed to acidic residues over residues 153-166 (MDEE…EEDK), 173-200 (FAED…EDEV), 228-261 (DNEE…DESD), and 267-283 (EVED…TEEG). The segment covering 284–343 (SEIKQNDETEEQPEKKFDADKEHEDAPEPLKEKLSDESKARAEDESDKSEDAAKEIKEPE) has biased composition (basic and acidic residues). The stretch at 319 to 465 (DESKARAEDE…KSNLALKRDE (147 aa)) forms a coiled coil. Acidic residues predominate over residues 358–374 (DEAELLDDEAELSDDEA). Composition is skewed to basic and acidic residues over residues 375–397 (ELSK…KAEK), 407–453 (DEAK…EFAK), and 461–491 (LKRD…KSKD).

As to expression, component of the acid-soluble organic matrix of the aragonitic skeleton (at protein level).

It is found in the secreted. This Acropora millepora (Staghorn coral) protein is Aspartic and glutamic acid-rich protein.